The following is a 427-amino-acid chain: Enolase (427 aa).

Gln163 contributes to the (2R)-2-phosphoglycerate binding site. Glu205 serves as the catalytic Proton donor. Residues Asp242, Glu285, and Asp312 each coordinate Mg(2+). (2R)-2-phosphoglycerate is bound by residues Lys337, Arg366, Ser367, and Lys388. Residue Lys337 is the Proton acceptor of the active site.

It belongs to the enolase family. It depends on Mg(2+) as a cofactor.

It localises to the cytoplasm. The protein localises to the secreted. The protein resides in the cell surface. The enzyme catalyses (2R)-2-phosphoglycerate = phosphoenolpyruvate + H2O. Its pathway is carbohydrate degradation; glycolysis; pyruvate from D-glyceraldehyde 3-phosphate: step 4/5. Functionally, catalyzes the reversible conversion of 2-phosphoglycerate (2-PG) into phosphoenolpyruvate (PEP). It is essential for the degradation of carbohydrates via glycolysis. This is Enolase from Bradyrhizobium sp. (strain BTAi1 / ATCC BAA-1182).